The chain runs to 480 residues: UDP-glycosyltransferase 71C5 (480 aa).

Residues Ser290, 349–351 (APQ), 366–374 (HCGWNSVQE), and 388–391 (YAEQ) each bind UDP-alpha-D-glucose.

It belongs to the UDP-glycosyltransferase family.

In terms of biological role, possesses low quercetin 3-O-glucosyltransferase activity in vitro. The chain is UDP-glycosyltransferase 71C5 (UGT71C5) from Arabidopsis thaliana (Mouse-ear cress).